Here is a 353-residue protein sequence, read N- to C-terminus: Photosystem II D2 protein (353 aa).

Residue threonine 2 is modified to N-acetylthreonine. Threonine 2 carries the phosphothreonine modification. Residues 41–61 form a helical membrane-spanning segment; that stretch reads CAYFALGGWFTGTTFVTSWYT. Histidine 118 is a chlorophyll a binding site. The helical transmembrane segment at 125–141 threads the bilayer; that stretch reads GFMLRQFELARSVQLRP. Positions 130 and 143 each coordinate pheophytin a. The helical transmembrane segment at 153 to 166 threads the bilayer; the sequence is VFVSVFLIYPLGQS. Histidine 198 is a chlorophyll a binding site. A helical transmembrane segment spans residues 208–228; that stretch reads AALLCAIHGATVENTLFEDGD. A plastoquinone-binding residues include histidine 215 and phenylalanine 262. Residue histidine 215 participates in Fe cation binding. Histidine 269 is a binding site for Fe cation. The helical transmembrane segment at 279–295 threads the bilayer; it reads GLWMSALGVVGLALNLR.

The protein belongs to the reaction center PufL/M/PsbA/D family. As to quaternary structure, PSII is composed of 1 copy each of membrane proteins PsbA, PsbB, PsbC, PsbD, PsbE, PsbF, PsbH, PsbI, PsbJ, PsbK, PsbL, PsbM, PsbT, PsbX, PsbY, PsbZ, Psb30/Ycf12, at least 3 peripheral proteins of the oxygen-evolving complex and a large number of cofactors. It forms dimeric complexes. The D1/D2 heterodimer binds P680, chlorophylls that are the primary electron donor of PSII, and subsequent electron acceptors. It shares a non-heme iron and each subunit binds pheophytin, quinone, additional chlorophylls, carotenoids and lipids. There is also a Cl(-1) ion associated with D1 and D2, which is required for oxygen evolution. The PSII complex binds additional chlorophylls, carotenoids and specific lipids. is required as a cofactor.

The protein localises to the plastid. Its subcellular location is the chloroplast thylakoid membrane. The enzyme catalyses 2 a plastoquinone + 4 hnu + 2 H2O = 2 a plastoquinol + O2. Photosystem II (PSII) is a light-driven water:plastoquinone oxidoreductase that uses light energy to abstract electrons from H(2)O, generating O(2) and a proton gradient subsequently used for ATP formation. It consists of a core antenna complex that captures photons, and an electron transfer chain that converts photonic excitation into a charge separation. The D1/D2 (PsbA/PsbD) reaction center heterodimer binds P680, the primary electron donor of PSII as well as several subsequent electron acceptors. D2 is needed for assembly of a stable PSII complex. The sequence is that of Photosystem II D2 protein from Aethionema grandiflorum (Persian stone-cress).